Here is a 327-residue protein sequence, read N- to C-terminus: DNA repair and recombination protein RadA (327 aa).

113 to 120 (GEFGSGKS) lines the ATP pocket.

It belongs to the eukaryotic RecA-like protein family.

Functionally, involved in DNA repair and in homologous recombination. Binds and assemble on single-stranded DNA to form a nucleoprotein filament. Hydrolyzes ATP in a ssDNA-dependent manner and promotes DNA strand exchange between homologous DNA molecules. In Ignicoccus hospitalis (strain KIN4/I / DSM 18386 / JCM 14125), this protein is DNA repair and recombination protein RadA.